The primary structure comprises 156 residues: Ribosomal RNA large subunit methyltransferase H (156 aa).

S-adenosyl-L-methionine contacts are provided by residues Leu73, Gly104, and 123 to 128; that span reads LSPLTL.

This sequence belongs to the RNA methyltransferase RlmH family. In terms of assembly, homodimer.

The protein resides in the cytoplasm. The catalysed reaction is pseudouridine(1915) in 23S rRNA + S-adenosyl-L-methionine = N(3)-methylpseudouridine(1915) in 23S rRNA + S-adenosyl-L-homocysteine + H(+). Its function is as follows. Specifically methylates the pseudouridine at position 1915 (m3Psi1915) in 23S rRNA. This Photobacterium profundum (strain SS9) protein is Ribosomal RNA large subunit methyltransferase H.